The chain runs to 239 residues: tRNA (guanine-N(7)-)-methyltransferase (239 aa).

Residues Glu69, Glu94, Asp121, and Asp144 each coordinate S-adenosyl-L-methionine. Residue Asp144 is part of the active site. Substrate-binding positions include Lys148, Asp180, and 217 to 220 (TNFE).

It belongs to the class I-like SAM-binding methyltransferase superfamily. TrmB family. Monomer.

It carries out the reaction guanosine(46) in tRNA + S-adenosyl-L-methionine = N(7)-methylguanosine(46) in tRNA + S-adenosyl-L-homocysteine. The protein operates within tRNA modification; N(7)-methylguanine-tRNA biosynthesis. Its function is as follows. Catalyzes the formation of N(7)-methylguanine at position 46 (m7G46) in tRNA. This is tRNA (guanine-N(7)-)-methyltransferase from Buchnera aphidicola subsp. Schizaphis graminum (strain Sg).